A 532-amino-acid chain; its full sequence is Zinc finger protein ZIC 2 (532 aa).

The segment at 100 to 255 (PHAAHVGSYS…YMRQQCIKQE (156 aa)) is necessary for interaction with MDFIC and transcriptional activation or repression. Phosphoserine occurs at positions 191 and 199. Residue Lys253 forms a Glycyl lysine isopeptide (Lys-Gly) (interchain with G-Cter in SUMO2) linkage. The C2H2-type 1; atypical zinc-finger motif lies at 256–291 (LICKWIDPEQLSNPKKSCNKTFSTMHELVTHVSVEH). A C2H2-type 2; atypical zinc finger spans residues 300 to 327 (HVCFWEECPREGKPFKAKYKLVNHIRVH). C2H2-type zinc fingers lie at residues 333-357 (FPCP…KRTH), 363-387 (FQCE…MHVH), and 393-415 (YLCK…MKVH). 2 disordered regions span residues 406–452 (SSLR…SSSN) and 475–532 (HRGG…EWYV). A compositionally biased stretch (low complexity) spans 417–435 (SSPQGSESSPAASSGYESS). Positions 476 to 521 (RGGGSGSGGAGGGSGGGSGSGGGGGGAGGGGGGSSGGGSGTAGGHS) are enriched in gly residues. Positions 523–532 (LSSNFNEWYV) are enriched in polar residues.

The protein belongs to the GLI C2H2-type zinc-finger protein family. In terms of assembly, interacts with RNF180. Interacts (via the C2H2-type domains 3, 4 and 5) with MDFIC (via the C2H2-type domains 3, 4 and 5); the interaction reduces its transcriptional activity. Interacts with GLI1 and GLI2. Interacts (via C2H2-type domain 3) with DHX9. Post-translationally, phosphorylated. Ubiquitinated by RNF180, leading to its degradation.

Its subcellular location is the nucleus. It is found in the cytoplasm. Acts as a transcriptional activator or repressor. Plays important roles in the early stage of organogenesis of the CNS. Activates the transcription of the serotonin transporter SERT in uncrossed ipsilateral retinal ganglion cells (iRGCs) to refine eye-specific projections in primary visual targets. Its transcriptional activity is repressed by MDFIC. Involved in the formation of the ipsilateral retinal projection at the optic chiasm midline. Drives the expression of EPHB1 on ipsilaterally projecting growth cones. Binds to the minimal GLI-consensus sequence 5'-TGGGTGGTC-3'. Associates to the basal SERT promoter region from ventrotemporal retinal segments of retinal embryos. The chain is Zinc finger protein ZIC 2 (ZIC2) from Homo sapiens (Human).